The sequence spans 681 residues: T-box brain protein 1 (681 aa).

Disordered regions lie at residues 43 to 83 and 108 to 127; these read TDNL…RSKL and SQSS…FPYP. The segment covering 58-68 has biased composition (polar residues); that stretch reads GMTNQSDTDNF. Residues 108 to 122 show a composition bias toward low complexity; it reads SQSSQPQSAATAPSA. The T-box DNA-binding region spans 213 to 393; the sequence is LWLKFHRHQT…HNPFAKGFRD (181 aa). A Phosphothreonine modification is found at Thr-408. At Ser-410 the chain carries Phosphoserine. Positions 447–483 are disordered; that stretch reads PGAGAGPGPGTDRSVPHTNGLLSPQQAEDPGAPSPQR. Positions 462 to 472 are enriched in polar residues; that stretch reads PHTNGLLSPQQ. At Ser-594 the chain carries Phosphoserine. Residues 597-655 are disordered; that stretch reads APAAEDAKPKDLSDSSWIETPSSIKSIDSSDSGIYEQAKRRRISPADTPVSESSSPLKS. Residues 618–628 are compositionally biased toward low complexity; it reads SSIKSIDSSDS. Position 640 is a phosphoserine (Ser-640).

As to quaternary structure, homodimer. Part of a complex containing CASK, TBR1 and TSPYL2; may modulate gene expression in response to neuronal synaptic activity. Forms homodimers. Interacts with FOXP2. Interacts with FOXP1. Interacts with BCL11A. Expressed in the developing and adult cortex. Expressed in the olfactory bulbs.

It is found in the nucleus. In terms of biological role, transcriptional repressor involved in multiple aspects of cortical development, including neuronal migration, laminar and areal identity, and axonal projection. As transcriptional repressor of FEZF2, it blocks the formation of the corticospinal (CS) tract from layer 6 projection neurons, thereby restricting the origin of CS axons specifically to layer 5 neurons. The protein is T-box brain protein 1 (Tbr1) of Mus musculus (Mouse).